Reading from the N-terminus, the 450-residue chain is 3-phosphoshikimate 1-carboxyvinyltransferase (450 aa).

K28, S29, and R33 together coordinate 3-phosphoshikimate. K28 contacts phosphoenolpyruvate. Residues G100 and R128 each coordinate phosphoenolpyruvate. S173, Q175, D326, and K353 together coordinate 3-phosphoshikimate. Phosphoenolpyruvate is bound at residue Q175. The active-site Proton acceptor is D326. The phosphoenolpyruvate site is built by R357 and R402.

Belongs to the EPSP synthase family. In terms of assembly, monomer.

The protein resides in the cytoplasm. It carries out the reaction 3-phosphoshikimate + phosphoenolpyruvate = 5-O-(1-carboxyvinyl)-3-phosphoshikimate + phosphate. Its pathway is metabolic intermediate biosynthesis; chorismate biosynthesis; chorismate from D-erythrose 4-phosphate and phosphoenolpyruvate: step 6/7. Its function is as follows. Catalyzes the transfer of the enolpyruvyl moiety of phosphoenolpyruvate (PEP) to the 5-hydroxyl of shikimate-3-phosphate (S3P) to produce enolpyruvyl shikimate-3-phosphate and inorganic phosphate. This is 3-phosphoshikimate 1-carboxyvinyltransferase from Brucella melitensis biotype 1 (strain ATCC 23456 / CCUG 17765 / NCTC 10094 / 16M).